The following is an 812-amino-acid chain: E3 UFM1-protein ligase 1 homolog (812 aa).

The tract at residues 389 to 495 is disordered; that stretch reads IKHSAGQGKP…KTKEDNTNIF (107 aa). 2 stretches are compositionally biased toward basic and acidic residues: residues 403–415 and 475–491; these read SEHR…KDLG and DAKH…KEDN.

The protein belongs to the UFL1 family.

In terms of biological role, E3 UFM1-protein ligase that mediates ufmylation of target proteins. This is E3 UFM1-protein ligase 1 homolog from Oryza sativa subsp. indica (Rice).